The primary structure comprises 419 residues: Menaquinone reductase, integral membrane subunit (419 aa).

10 consecutive transmembrane segments (helical) span residues 23 to 43 (LSKF…GLYA), 61 to 81 (FGFG…AGAF), 98 to 118 (IINL…LVLV), 143 to 163 (VIFC…PLIL), 176 to 196 (AVAH…AFLS), 221 to 241 (FFIW…SGPV), 270 to 290 (IAGT…YAWA), 316 to 336 (LWAE…VPAL), 341 to 361 (VLFY…RYVM), and 383 to 403 (WAEW…LSLS).

This sequence belongs to the NrfD family. In terms of assembly, the Qrc complex is composed of four subunits: QrcA, QrcB, QrcC and QrcD. Can form a supercomplex with the [NiFe] hydrogenase HynA1 and the tetraheme Type I cytochrome c3 TpIc(3), its physiological electron donors.

Its subcellular location is the cell inner membrane. In terms of biological role, component of the respiratory Qrc complex, that catalyzes the reduction of the menaquinone pool using electrons transferred from the reduced periplasmic cytochrome c3, and which is probably involved in sulfate respiration. Is likely essential for growth on H(2) or formate since the periplasmic hydrogenases and/or formate dehydrogenases act as primary electron donors for the Qrc complex. The QrcD subunit anchors the protein complex to the membrane and likely interacts with the quinone pool. This chain is Menaquinone reductase, integral membrane subunit, found in Nitratidesulfovibrio vulgaris (strain ATCC 29579 / DSM 644 / CCUG 34227 / NCIMB 8303 / VKM B-1760 / Hildenborough) (Desulfovibrio vulgaris).